The primary structure comprises 275 residues: Bis(5'-nucleosyl)-tetraphosphatase, symmetrical (275 aa).

Belongs to the Ap4A hydrolase family.

It catalyses the reaction P(1),P(4)-bis(5'-adenosyl) tetraphosphate + H2O = 2 ADP + 2 H(+). Functionally, hydrolyzes diadenosine 5',5'''-P1,P4-tetraphosphate to yield ADP. The polypeptide is Bis(5'-nucleosyl)-tetraphosphatase, symmetrical (apaH) (Pasteurella multocida (strain Pm70)).